Reading from the N-terminus, the 1048-residue chain is Ankyrin repeat domain-containing protein 27 (1048 aa).

Residues 1 to 372 (MALYDEDLLK…RQGSLSTKTP (372 aa)) are sufficient for GEF activity towards RAB21. The VPS9 domain occupies 233-371 (ASEDAAFNKI…IRQGSLSTKT (139 aa)). ANK repeat units follow at residues 396 to 426 (TPID…DKDA), 462 to 491 (RGQT…VVNA), 495 to 524 (HGST…STEV), 528 to 557 (NGNT…QACR), 564 to 593 (KGDT…PTAV), and 597 to 627 (LKET…RPRP). Residues 396–460 (TPIDCLFKHI…PSVVTPFSRD (65 aa)) form a sufficient for interaction with VPS29 region. Positions 451–600 (PSVVTPFSRD…TAVQNRLKET (150 aa)) are interaction with RAB38. The interval 451–729 (PSVVTPFSRD…CAPAQKLARI (279 aa)) is interaction with RAB32. Basic and acidic residues predominate over residues 618–627 (HLSSDRRPRP). A disordered region spans residues 618–650 (HLSSDRRPRPSEVPAQSPTRSVDSISQGSSTSS). Positions 638–650 (SVDSISQGSSTSS) are enriched in low complexity. The required for interaction with VAMP7 stretch occupies residues 658-707 (FRQEEVKKDYREVEKLLRAVADGDLEMVRYLLEWTEDDLDDVEDAISTVD). ANK repeat units follow at residues 668-698 (REVE…DLDD), 742-771 (DGFS…YSGA), 775-804 (SQAV…KPNK), 808-837 (SGNT…SINA), and 841-870 (KGNT…SVDI). The interval 692-745 (TEDDLDDVEDAISTVDLEFCHPLCQCPKCAPAQKLARISANGLSVNVTNQDGFS) is sufficient for interaction with VPS29. A compositionally biased stretch (basic and acidic residues) spans 949 to 962 (ERTSRETMGRDRSV). A disordered region spans residues 949–1019 (ERTSRETMGR…AAPGHRPMVR (71 aa)). Phosphoserine occurs at positions 961 and 969. Positions 979-995 (TGKQSDLSDLSRYQTSE) are enriched in polar residues. The segment covering 996–1006 (EGNKGLPERPV) has biased composition (basic and acidic residues). The residue at position 1022 (threonine 1022) is a Phosphothreonine.

In terms of assembly, interacts with RAB21 (GDP-bound form), VPS29, KIF5A, KIF5C, GOLGA4. Interacts with RAB32 (GTP-bound form), RAB38 (GTP-bound form), VAMP7. Interacts with low affinity with RAB5. ANKRD27:RAB32 heterodimers can homodimerize to form tetramers. Can interact with RAB38 or RAB32, VPS29 and VAMP7 simultaneously. A decreased interaction with RAB32 seen in the presence of SGSM2.

Its subcellular location is the early endosome. The protein resides in the late endosome. The protein localises to the cytoplasmic vesicle membrane. It localises to the lysosome. It is found in the cell membrane. Its subcellular location is the melanosome. The protein resides in the cytoplasmic vesicle. May be a guanine exchange factor (GEF) for Rab21, Rab32 and Rab38 and regulate endosome dynamics. May regulate the participation of VAMP7 in membrane fusion events; in vitro inhibits VAMP7-mediated SNARE complex formation by trapping VAMP7 in a closed, fusogenically inactive conformation. Involved in peripheral melanosomal distribution of TYRP1 in melanocytes; the function, which probably is implicating vesicle-trafficking, includes cooperation with Rab32, Rab38 and VAMP7. Involved in the regulation of neurite growth; the function seems to require its GEF activity, probably towards Rab21, and VAMP7 but not Rab32/38. Proposed to be involved in Golgi sorting of VAMP7 and transport of VAMP7 vesicles to the cell surface; the function seems to implicate kinesin heavy chain isoform 5 proteins, GOLGA4, RAB21 and MACF1. Required for the colocalization of VAMP7 and Rab21, probably on TGN sites. Involved in GLUT1 endosome-to-plasma membrane trafficking; the function is dependent of association with VPS29. Regulates the proper trafficking of melanogenic enzymes TYR, TYRP1 and DCT/TYRP2 to melanosomes in melanocytes. In Mus musculus (Mouse), this protein is Ankyrin repeat domain-containing protein 27 (Ankrd27).